Consider the following 422-residue polypeptide: Serine protease inhibitor A3A (422 aa).

Positions Met-1–Ala-17 are cleaved as a signal peptide. 3 N-linked (GlcNAc...) asparagine glycosylation sites follow: Asn-218, Asn-230, and Asn-271. The interval His-369–Val-394 is RCL.

Belongs to the serpin family.

The protein localises to the secreted. This chain is Serine protease inhibitor A3A (Serpina3a), found in Mus musculus (Mouse).